The sequence spans 238 residues: MSSSTANVDPAELAKFSELAHRWWDLESEFRPLHEINPLRLGWIDGLAPLQGRRVLDVGCGGGILADAMARKGATVTGIDLATKSLKVAQLHALEAGTPDIQYREVSVEALAEESPASFDTVTCMEMLEHVPDPASVVQACARLVKPGGWVFFSTINRNAKAFLLAIVGAEYVLGMLPRGTHEYAKLIKPSELATACRSARLDVLQTRGMEYNPLTRRYALSGDTSVNYLMACRRAEA.

S-adenosyl-L-methionine is bound by residues R40, G59, D80, and M125.

The protein belongs to the methyltransferase superfamily. UbiG/COQ3 family.

It catalyses the reaction a 3-demethylubiquinol + S-adenosyl-L-methionine = a ubiquinol + S-adenosyl-L-homocysteine + H(+). The enzyme catalyses a 3-(all-trans-polyprenyl)benzene-1,2-diol + S-adenosyl-L-methionine = a 2-methoxy-6-(all-trans-polyprenyl)phenol + S-adenosyl-L-homocysteine + H(+). It functions in the pathway cofactor biosynthesis; ubiquinone biosynthesis. Its function is as follows. O-methyltransferase that catalyzes the 2 O-methylation steps in the ubiquinone biosynthetic pathway. In Paracidovorax citrulli (strain AAC00-1) (Acidovorax citrulli), this protein is Ubiquinone biosynthesis O-methyltransferase.